A 428-amino-acid polypeptide reads, in one-letter code: Enolase (428 aa).

Q163 is a binding site for (2R)-2-phosphoglycerate. The Proton donor role is filled by E205. Mg(2+) is bound by residues D242, E285, and D312. The (2R)-2-phosphoglycerate site is built by K337, R366, S367, and K388. K337 acts as the Proton acceptor in catalysis.

The protein belongs to the enolase family. In terms of assembly, component of the RNA degradosome, a multiprotein complex involved in RNA processing and mRNA degradation. Mg(2+) is required as a cofactor.

Its subcellular location is the cytoplasm. It localises to the secreted. The protein localises to the cell surface. The catalysed reaction is (2R)-2-phosphoglycerate = phosphoenolpyruvate + H2O. It functions in the pathway carbohydrate degradation; glycolysis; pyruvate from D-glyceraldehyde 3-phosphate: step 4/5. In terms of biological role, catalyzes the reversible conversion of 2-phosphoglycerate (2-PG) into phosphoenolpyruvate (PEP). It is essential for the degradation of carbohydrates via glycolysis. The sequence is that of Enolase from Halorhodospira halophila (strain DSM 244 / SL1) (Ectothiorhodospira halophila (strain DSM 244 / SL1)).